A 462-amino-acid polypeptide reads, in one-letter code: tRNA modification GTPase MnmE (462 aa).

Positions 27, 89, and 128 each coordinate (6S)-5-formyl-5,6,7,8-tetrahydrofolate. A TrmE-type G domain is found at Gly223–Gly383. Asn233 provides a ligand contact to K(+). GTP contacts are provided by residues Asn233 to Ser238, Thr252 to Thr258, and Asp277 to Gly280. Ser237 serves as a coordination point for Mg(2+). Residues Thr252, Leu254, and Thr257 each contribute to the K(+) site. Thr258 provides a ligand contact to Mg(2+). A (6S)-5-formyl-5,6,7,8-tetrahydrofolate-binding site is contributed by Lys462.

Belongs to the TRAFAC class TrmE-Era-EngA-EngB-Septin-like GTPase superfamily. TrmE GTPase family. As to quaternary structure, homodimer. Heterotetramer of two MnmE and two MnmG subunits. It depends on K(+) as a cofactor.

Its subcellular location is the cytoplasm. Functionally, exhibits a very high intrinsic GTPase hydrolysis rate. Involved in the addition of a carboxymethylaminomethyl (cmnm) group at the wobble position (U34) of certain tRNAs, forming tRNA-cmnm(5)s(2)U34. This chain is tRNA modification GTPase MnmE, found in Synechococcus elongatus (strain ATCC 33912 / PCC 7942 / FACHB-805) (Anacystis nidulans R2).